The following is a 446-amino-acid chain: Phosphoglucosamine mutase (446 aa).

Catalysis depends on Ser-103, which acts as the Phosphoserine intermediate. Mg(2+) contacts are provided by Ser-103, Asp-242, Asp-244, and Asp-246. Ser-103 is modified (phosphoserine).

It belongs to the phosphohexose mutase family. Mg(2+) serves as cofactor. Activated by phosphorylation.

It catalyses the reaction alpha-D-glucosamine 1-phosphate = D-glucosamine 6-phosphate. In terms of biological role, catalyzes the conversion of glucosamine-6-phosphate to glucosamine-1-phosphate. In Vibrio vulnificus (strain YJ016), this protein is Phosphoglucosamine mutase.